A 149-amino-acid polypeptide reads, in one-letter code: UPF0260 protein PFL_1499 (149 aa).

The protein belongs to the UPF0260 family.

This Pseudomonas fluorescens (strain ATCC BAA-477 / NRRL B-23932 / Pf-5) protein is UPF0260 protein PFL_1499.